The sequence spans 213 residues: Cytochrome c biogenesis ATP-binding export protein CcmA (213 aa).

Residues 11-213 (LTARNLECIR…TVTVHHLVLS (203 aa)) enclose the ABC transporter domain. 43–50 (GPNGSGKT) is an ATP binding site.

Belongs to the ABC transporter superfamily. CcmA exporter (TC 3.A.1.107) family. The complex is composed of two ATP-binding proteins (CcmA) and two transmembrane proteins (CcmB).

It is found in the cell inner membrane. The enzyme catalyses heme b(in) + ATP + H2O = heme b(out) + ADP + phosphate + H(+). In terms of biological role, part of the ABC transporter complex CcmAB involved in the biogenesis of c-type cytochromes; once thought to export heme, this seems not to be the case, but its exact role is uncertain. Responsible for energy coupling to the transport system. The polypeptide is Cytochrome c biogenesis ATP-binding export protein CcmA (Nitrosomonas europaea (strain ATCC 19718 / CIP 103999 / KCTC 2705 / NBRC 14298)).